The sequence spans 429 residues: Protein ABERRANT PANICLE ORGANIZATION 1 (429 aa).

Over residues 1 to 11 (MMNPRRLPPLP) the composition is skewed to pro residues. Residues 1–21 (MMNPRRLPPLPSSTSSASAAD) are disordered. The 47-residue stretch at 25–71 (PRVWRRLPQPLVDRVLACLPTPSFLRLRAACRRFYHLLFSSPFLHSH) folds into the F-box domain. 2 helical membrane passes run 72-92 (LLLSPHLPFFAFVVPAAGHLL) and 112-132 (VAGGPAAFSPAAASAGLLAFL). Kelch repeat units lie at residues 229 to 277 (MAFA…ELGG), 284 to 339 (RVAL…AEGG), and 350 to 397 (YVVL…GAAG).

In terms of assembly, part of a putative SCF (ASK/Cullin/F-box) ubiquitin ligase complex. Interacts with FL/APO2. As to expression, expressed in seedlings, roots, leaves, shoot apical meristem (SAM), developing panicles, and, at lower levels, in developing seeds.

Its subcellular location is the membrane. It participates in protein modification; protein ubiquitination. Component of SCF(ASK-cullin-F-box) E3 ubiquitin ligase complexes, which may mediate the ubiquitination and subsequent proteasomal degradation of target proteins. Together with FL/APO2, involved in the temporal regulation of meristem identity during both vegetative and reproductive developments in an APO2-dependent manner. Promotes spikelet formation by suppressing the precocious conversion of inflorescence meristems to spikelet meristems, probably via a positive regulation of class-C floral homeotic genes, but not of class-B genes, and through the control of cell proliferation in meristems. Mediates culm development and strength/diameter enhancement at internodes. Required for the regulation of the plastochron, floral organ identity, and floral determinacy. Controls the number of primary rachis branches (PRBs). May trigger the formation of vascular bundle systems which, consequently, promote carbohydrate translocation to panicles. Involved in ozone-induced grain yield regulation. The polypeptide is Protein ABERRANT PANICLE ORGANIZATION 1 (Oryza sativa subsp. indica (Rice)).